We begin with the raw amino-acid sequence, 285 residues long: Transcription initiation factor IIE subunit beta (285 aa).

2 stretches are compositionally biased toward polar residues: residues 1-10 (MSSLSDQLSS) and 33-44 (TPTAYLNSNDGH). Residues 1–56 (MSSLSDQLSSFKKKVANQPIYAKPQPRQPASPTPTAYLNSNDGHSSAASSPGSYSL) form a disordered region. Residues 45–55 (SSAASSPGSYS) show a composition bias toward low complexity. The segment at residues 67–142 (YSQPADSGVG…FTFKPLHNIR (76 aa)) is a DNA-binding region (TFIIE beta). The interval 240–272 (PTSVDPSTVKRAGHNQTPKQKKPKTRRGKITNT) is disordered. The segment covering 258–268 (KQKKPKTRRGK) has biased composition (basic residues).

The protein belongs to the TFIIE beta subunit family. TFIIE is a tetramer of two alpha (tfa1) and two beta (tfa2) subunits. TFIIE associates with RNA polymerase II via the beta subunit.

It is found in the nucleus. In terms of biological role, recruits TFIIH to the initiation complex and stimulates the RNA polymerase II C-terminal domain kinase and DNA-dependent ATPase activities of TFIIH. Both TFIIH and TFIIE are required for promoter clearance by RNA polymerase. The polypeptide is Transcription initiation factor IIE subunit beta (tfa2) (Schizosaccharomyces pombe (strain 972 / ATCC 24843) (Fission yeast)).